A 487-amino-acid chain; its full sequence is GTPase Der (487 aa).

2 EngA-type G domains span residues 3 to 166 (PVIA…IAEL) and 201 to 374 (VKLA…ESAT). GTP is bound by residues 9–16 (GRPNVGKS), 56–60 (DTGGI), 118–121 (NKTD), 207–214 (GRPNVGKS), 254–258 (DTAGV), and 319–322 (NKWD). Residues 375-459 (KRISTAMLRR…PIKIEFREGD (85 aa)) form the KH-like domain.

The protein belongs to the TRAFAC class TrmE-Era-EngA-EngB-Septin-like GTPase superfamily. EngA (Der) GTPase family. In terms of assembly, associates with the 50S ribosomal subunit.

GTPase that plays an essential role in the late steps of ribosome biogenesis. The polypeptide is GTPase Der (Pseudoalteromonas translucida (strain TAC 125)).